A 281-amino-acid polypeptide reads, in one-letter code: MIAFIGSVFSPWYRWSGRREPQNHCCINMVTTGTDGRFTMTDRGRSALRQSRDSFQVGPSKLTWTGKELVIDVDEWGALPKLGKLKGRVVLTPRAVTGVEVRLTPDAGHTWRPFAPIADVEVDLAPGHKWTGHGYFDANFGTRALEEDFSFWTWGRFPLKDRTVCFYDATRLDRTKVALAVQINPDGSVCEIDSPPPLVKMKRTPWFVRRETRCDAGAHPAGVYSLLEAPFYSRALMRTQIDGEETVGMHEALDLVRFRQPVLKPMLAVRVPRRAGWKHKD.

It belongs to the CrtC hydratase family.

The catalysed reaction is rhodopin = all-trans-lycopene + H2O. It carries out the reaction 1,1'-dihydroxy-1,1',2,2'-tetrahydrolycopene = rhodopin + H2O. The protein operates within carotenoid biosynthesis; spheroidene biosynthesis. Functionally, involved in the biosynthesis of carotenoids spheroidene and spirilloxanthin. Catalyzes the hydration of neurosporene to the corresponding hydroxylated carotenoids 1-HO-neurosporene and that of lycopene to 1-HO-lycopene. It exhibits negligible activity in converting HO-neurosporene, HO-lycopene, or any other derivative such as spheroidene, 1-HO-3,4-didehydrolycopene. The sequence is that of Acyclic carotenoid 1,2-hydratase (crtC) from Rhodobacter capsulatus (strain ATCC BAA-309 / NBRC 16581 / SB1003).